The primary structure comprises 78 residues: Small integral membrane protein 5 (78 aa).

A helical transmembrane segment spans residues 32 to 52 (ILAFSVLVVFTATVVLLLLIA).

It is found in the membrane. The protein is Small integral membrane protein 5 (SMIM5) of Bos taurus (Bovine).